Reading from the N-terminus, the 379-residue chain is MDSRPTVVEIDLAALRHNFSLVQKRVPEGCGLLAVVKADAYGHGFQYVSEELEKLGVDAFAVAFLAEGVQLRMSGITRPVLILGGIYPGEERRCIGLNISTALFSLEQAAALDQAALEIKCYRKAHIHLKVDTGMGRLGVPYHEVPEFLAKLKQFKNLELEGIFSHFASADELDPEGIAFTKLQAERFNAAVEEARRQGYAPTYVHVANSAAILTQDLPYCNLARPGIILYGALPSGDFEGQVPSQPVMRLKSRVAMLKWVEPGTSISYGRRYVAAERALIASVPVGYADGYCRSLTNKGEALIRGQRAKVAGTVCMDWIMLDVTNVKGVAVGDDVTLLGPDPMGDCISAEEMAEKAGTIPYEVLCGIATRRVRRVYLG.

K37 serves as the catalytic Proton acceptor; specific for D-alanine. The residue at position 37 (K37) is an N6-(pyridoxal phosphate)lysine. R137 is a substrate binding site. Residue Y269 is the Proton acceptor; specific for L-alanine of the active site. Substrate is bound at residue M317.

It belongs to the alanine racemase family. Pyridoxal 5'-phosphate serves as cofactor.

The enzyme catalyses L-alanine = D-alanine. It participates in amino-acid biosynthesis; D-alanine biosynthesis; D-alanine from L-alanine: step 1/1. Its function is as follows. Catalyzes the interconversion of L-alanine and D-alanine. May also act on other amino acids. This chain is Alanine racemase (alr), found in Citrifermentans bemidjiense (strain ATCC BAA-1014 / DSM 16622 / JCM 12645 / Bem) (Geobacter bemidjiensis).